We begin with the raw amino-acid sequence, 430 residues long: MTTLTLNTSLLSSCRILAAFSGGLDSTVLLHQLVLWRERHPDVTLRAIHIHHGLSPHADSWVRHCETVCERWQVPLVVERVTLADNGLGIEAHAREARYRAFAQTLLPGEVLATAQHLDDQCETFLLALKRGSGPAGLSAMGECSPFAGTLLLRPLLRETRKTLEQWAVRHGLCWIEDESNQDDAYDRNFLRLRALPLLQQRWPHFPAAVARSATLCAEQERLLDELLASDLTDCITAEGTLRLSPLMLMSDVRRAAILRRWLAMRNAPMPSRDALERIWQEVALARDDASPCLRFGDHEIRRYQSQLWWIKTVAGQHETTVVWPVWQTPLALPAGLGTVQLVPGGELRRPREEESVSIRFKAPGVLHIVGRNGGRKLKKIWQEQGIPPWRRDTTPLLFYGETLIAAAGVFVTREGAAEDKEGVSLVWHA.

21–26 (SGGLDS) is a binding site for ATP.

Belongs to the tRNA(Ile)-lysidine synthase family.

It is found in the cytoplasm. The enzyme catalyses cytidine(34) in tRNA(Ile2) + L-lysine + ATP = lysidine(34) in tRNA(Ile2) + AMP + diphosphate + H(+). Its function is as follows. Ligates lysine onto the cytidine present at position 34 of the AUA codon-specific tRNA(Ile) that contains the anticodon CAU, in an ATP-dependent manner. Cytidine is converted to lysidine, thus changing the amino acid specificity of the tRNA from methionine to isoleucine. This Salmonella heidelberg (strain SL476) protein is tRNA(Ile)-lysidine synthase.